Reading from the N-terminus, the 312-residue chain is Protein dif-1 (312 aa).

3 Solcar repeats span residues 2-93 (SDVL…GKWL), 102-193 (MTFI…LKKK), and 203-289 (LSPG…TLAA). 6 helical membrane-spanning segments follow: residues 5-25 (LLNF…GHPF), 69-89 (MAAP…GCAV), 104-124 (FIQN…VMVP), 172-192 (TLLR…YLKK), 209-229 (LMAG…ADVL), and 261-282 (LFKG…CFFG).

The protein belongs to the mitochondrial carrier (TC 2.A.29) family.

The protein resides in the mitochondrion inner membrane. In terms of biological role, seems to play a role in the maintenance of tissue differentiation in the developing embryo, but not for its initiation. This chain is Protein dif-1 (dif-1), found in Caenorhabditis elegans.